Reading from the N-terminus, the 359-residue chain is Protein Wnt-5a (359 aa).

Residues 1 to 20 (MATTHLTAALALLCALLQVD) form the signal peptide. Residues cysteine 83 and cysteine 94 are joined by a disulfide bond. N-linked (GlcNAc...) asparagine glycosylation is found at asparagine 93 and asparagine 99. Disulfide bonds link cysteine 133/cysteine 141, cysteine 143/cysteine 161, cysteine 217/cysteine 231, cysteine 219/cysteine 226, cysteine 288/cysteine 319, cysteine 304/cysteine 314, cysteine 318/cysteine 358, cysteine 334/cysteine 349, cysteine 336/cysteine 346, and cysteine 341/cysteine 342. Serine 223 carries O-palmitoleoyl serine; by PORCN lipidation. Asparagine 291 and asparagine 305 each carry an N-linked (GlcNAc...) asparagine glycan.

This sequence belongs to the Wnt family. Post-translationally, palmitoleoylation is required for efficient binding to frizzled receptors. Depalmitoleoylation leads to Wnt signaling pathway inhibition. In terms of tissue distribution, neuroectodermal and non-neuroectodermal tissues.

It localises to the secreted. Its subcellular location is the extracellular space. The protein localises to the extracellular matrix. Ligand for members of the frizzled family of seven transmembrane receptors. Can activate or inhibit canonical Wnt signaling, depending on receptor context. Required during embryogenesis for extension of the primary anterior-posterior axis. This Ambystoma mexicanum (Axolotl) protein is Protein Wnt-5a (WNT-5A).